An 822-amino-acid polypeptide reads, in one-letter code: uncharacterized protein (822 aa).

Over 1–13 the chain is Cytoplasmic; the sequence is MCHNSVRSGNKAG. Residues 14-34 form a helical membrane-spanning segment; it reads FLGIKFGSALLSIATGAIAIA. Residues 35–44 lie on the Extracellular side of the membrane; sequence LLCKFHDHEA. A helical membrane pass occupies residues 45-65; it reads VLIVIVCSTLLYGIPSLISFI. Residues 66-76 are Cytoplasmic-facing; it reads TETVFAPSKFH. The chain crosses the membrane as a helical span at residues 77–97; that stretch reads IGYFYNVLNFALPLITMGCTV. The Extracellular segment spans residues 98–120; that stretch reads DYFHNTLRSPISVQSESHRVYIT. A helical membrane pass occupies residues 121 to 141; that stretch reads TLDSLLIFTLFINGIQLGFFL. The Cytoplasmic segment spans residues 142 to 822; that stretch reads KDGNANNFGS…PVEELVSPSK (681 aa). The interval 271-290 is disordered; the sequence is RNTQQATKVPTEKKSNHRSS. S690 is subject to Phosphoserine. The segment covering 698 to 712 has biased composition (polar residues); it reads TLQSSHSPTKSTSGN. 2 disordered regions span residues 698 to 728 and 751 to 783; these read TLQS…STVN and NGEE…GYPE. Over residues 761–776 the composition is skewed to low complexity; sequence QSIQSSSSGSEQESAG.

It is found in the membrane. This is an uncharacterized protein from Saccharomyces cerevisiae (strain ATCC 204508 / S288c) (Baker's yeast).